The sequence spans 418 residues: Secernin-3 (418 aa).

A propeptide spanning residues 1–5 (MEPYS) is cleaved from the precursor. Residue C6 is part of the active site. Position 6 is a glyoxylic acid (Cys); alternate (C6). A Pyruvic acid (Cys); alternate modification is found at C6.

This sequence belongs to the peptidase C69 family. Secernin subfamily.

Plays a role in thermal nociception. The chain is Secernin-3 (Scrn3) from Mus musculus (Mouse).